A 335-amino-acid polypeptide reads, in one-letter code: Phosphate acyltransferase (335 aa).

Belongs to the PlsX family. Homodimer. Probably interacts with PlsY.

The protein localises to the cytoplasm. The enzyme catalyses a fatty acyl-[ACP] + phosphate = an acyl phosphate + holo-[ACP]. It participates in lipid metabolism; phospholipid metabolism. Its function is as follows. Catalyzes the reversible formation of acyl-phosphate (acyl-PO(4)) from acyl-[acyl-carrier-protein] (acyl-ACP). This enzyme utilizes acyl-ACP as fatty acyl donor, but not acyl-CoA. The chain is Phosphate acyltransferase from Streptococcus pyogenes serotype M28 (strain MGAS6180).